The chain runs to 314 residues: GTPase Era (314 aa).

The 169-residue stretch at 21-189 (KSGFVGIIGR…QNTLIEQLEP (169 aa)) folds into the Era-type G domain. Residues 29–36 (GRPNVGKS) form a G1 region. Residue 29–36 (GRPNVGKS) coordinates GTP. The tract at residues 55-59 (QTTRN) is G2. The G3 stretch occupies residues 76–79 (DTPG). Residues 76–80 (DTPGI) and 138–141 (NKSD) each bind GTP. The interval 138–141 (NKSD) is G4. Residues 168-170 (FSA) form a G5 region. Residues 212–296 (IREQILQLTR…FLKLFVKVEP (85 aa)) enclose the KH type-2 domain.

The protein belongs to the TRAFAC class TrmE-Era-EngA-EngB-Septin-like GTPase superfamily. Era GTPase family. As to quaternary structure, monomer.

It localises to the cytoplasm. Its subcellular location is the cell inner membrane. An essential GTPase that binds both GDP and GTP, with rapid nucleotide exchange. Plays a role in 16S rRNA processing and 30S ribosomal subunit biogenesis and possibly also in cell cycle regulation and energy metabolism. The chain is GTPase Era from Crocosphaera subtropica (strain ATCC 51142 / BH68) (Cyanothece sp. (strain ATCC 51142)).